We begin with the raw amino-acid sequence, 184 residues long: Inosine triphosphate pyrophosphatase (184 aa).

Position 10-15 (T10–K15) interacts with ITP. Mg(2+) is bound at residue E37. Residues K49, D65–T66, K82, F141–D144, K164, and H169–R170 each bind ITP.

It belongs to the HAM1 NTPase family. In terms of assembly, homodimer. It depends on Mg(2+) as a cofactor. Requires Mn(2+) as cofactor.

The protein resides in the cytoplasm. The catalysed reaction is ITP + H2O = IMP + diphosphate + H(+). It carries out the reaction dITP + H2O = dIMP + diphosphate + H(+). The enzyme catalyses XTP + H2O = XMP + diphosphate + H(+). Pyrophosphatase that hydrolyzes non-canonical purine nucleotides such as inosine triphosphate (ITP), deoxyinosine triphosphate (dITP) or xanthosine 5'-triphosphate (XTP) to their respective monophosphate derivatives. The enzyme does not distinguish between the deoxy- and ribose forms. Probably excludes non-canonical purines from RNA and DNA precursor pools, thus preventing their incorporation into RNA and DNA and avoiding chromosomal lesions. The sequence is that of Inosine triphosphate pyrophosphatase from Caenorhabditis elegans.